The sequence spans 45 residues: Protamine Z2 (45 aa).

Positions Met-1–Lys-23 are enriched in basic residues. The segment at Met-1–Ser-26 is disordered.

In terms of tissue distribution, testis.

It localises to the nucleus. The protein resides in the chromosome. Its function is as follows. Protamines substitute for histones in the chromatin of sperm during the haploid phase of spermatogenesis. They compact sperm DNA into a highly condensed, stable and inactive complex. The polypeptide is Protamine Z2 (Scyliorhinus canicula (Small-spotted catshark)).